The chain runs to 150 residues: D-aminoacyl-tRNA deacylase (150 aa).

The Gly-cisPro motif, important for rejection of L-amino acids signature appears at 136–137 (GP).

It belongs to the DTD family. In terms of assembly, homodimer.

Its subcellular location is the cytoplasm. It catalyses the reaction glycyl-tRNA(Ala) + H2O = tRNA(Ala) + glycine + H(+). The enzyme catalyses a D-aminoacyl-tRNA + H2O = a tRNA + a D-alpha-amino acid + H(+). Functionally, an aminoacyl-tRNA editing enzyme that deacylates mischarged D-aminoacyl-tRNAs. Also deacylates mischarged glycyl-tRNA(Ala), protecting cells against glycine mischarging by AlaRS. Acts via tRNA-based rather than protein-based catalysis; rejects L-amino acids rather than detecting D-amino acids in the active site. By recycling D-aminoacyl-tRNA to D-amino acids and free tRNA molecules, this enzyme counteracts the toxicity associated with the formation of D-aminoacyl-tRNA entities in vivo and helps enforce protein L-homochirality. The protein is D-aminoacyl-tRNA deacylase of Staphylococcus aureus (strain bovine RF122 / ET3-1).